The primary structure comprises 503 residues: ATP synthase subunit beta (503 aa).

157–164 (GGAGVGKT) serves as a coordination point for ATP.

This sequence belongs to the ATPase alpha/beta chains family. F-type ATPases have 2 components, CF(1) - the catalytic core - and CF(0) - the membrane proton channel. CF(1) has five subunits: alpha(3), beta(3), gamma(1), delta(1), epsilon(1). CF(0) has three main subunits: a(1), b(2) and c(9-12). The alpha and beta chains form an alternating ring which encloses part of the gamma chain. CF(1) is attached to CF(0) by a central stalk formed by the gamma and epsilon chains, while a peripheral stalk is formed by the delta and b chains.

It is found in the cell inner membrane. It catalyses the reaction ATP + H2O + 4 H(+)(in) = ADP + phosphate + 5 H(+)(out). In terms of biological role, produces ATP from ADP in the presence of a proton gradient across the membrane. The catalytic sites are hosted primarily by the beta subunits. The chain is ATP synthase subunit beta from Flavobacterium johnsoniae (strain ATCC 17061 / DSM 2064 / JCM 8514 / BCRC 14874 / CCUG 350202 / NBRC 14942 / NCIMB 11054 / UW101) (Cytophaga johnsonae).